The chain runs to 207 residues: Transcriptional regulatory protein RcsA (207 aa).

Residues 131-196 (INLPTLSLSR…VIYHVVRLTD (66 aa)) enclose the HTH luxR-type domain. Residues 155-174 (TIQISDRMNIKAKTVSSHKG) constitute a DNA-binding region (H-T-H motif).

Belongs to the RcsA family. In terms of assembly, interacts with RcsB.

Component of the Rcs signaling system, which controls transcription of numerous genes. Binds, with RcsB, to the RcsAB box to regulate expression of genes. In Salmonella typhimurium (strain LT2 / SGSC1412 / ATCC 700720), this protein is Transcriptional regulatory protein RcsA.